The sequence spans 385 residues: Centrosomal protein of 44 kDa (385 aa).

A binds with microtubules and centrioles region spans residues 11 to 192; the sequence is RNLEQVLRSL…GANIPEDTVT (182 aa). Residues 126-154 form a disordered region; the sequence is LEKTPSQQRKKTSSAKSEPCSSTEKTSTE. The span at 139–154 shows a compositional bias: polar residues; it reads SAKSEPCSSTEKTSTE. Positions 230–271 form a coiled coil; that stretch reads EVTALQSMLAECQEKLKKLTCIESRLESLEEKMKGKVLVNEK. Residues 303-348 are disordered; it reads SEDYSSSSDMDSLNPDRKSKEERHANIPLSSGYSTVSSDSTPRTST. The segment covering 305–314 has biased composition (low complexity); the sequence is DYSSSSDMDS. The span at 316–327 shows a compositional bias: basic and acidic residues; that stretch reads NPDRKSKEERHA. Low complexity predominate over residues 332–342; sequence SSGYSTVSSDS. A Phosphoserine modification is found at Ser342. Thr343 is subject to Phosphothreonine. Positions 358-381 form a coiled coil; that stretch reads SEETTMQKMERMKKMFEETAELLK.

As to quaternary structure, interacts with CROCC. Interacts with POC1B; the interaction is direct and recruits POC1B to centriolar microtubules. Binds to centriolar microtubules.

The protein localises to the cytoplasm. The protein resides in the cytoskeleton. It is found in the microtubule organizing center. Its subcellular location is the centrosome. It localises to the centriole. The protein localises to the spindle pole. The protein resides in the midbody. Its function is as follows. Centriole-enriched microtubule-binding protein involved in centriole biogenesis. In collaboration with CEP295 and POC1B, is required for the centriole-to-centrosome conversion by ensuring the formation of bona fide centriole wall. Functions as a linker component that maintains centrosome cohesion. Associates with CROCC and regulates its stability and localization to the centrosome. This Bos taurus (Bovine) protein is Centrosomal protein of 44 kDa (CEP44).